Consider the following 302-residue polypeptide: Methionyl-tRNA formyltransferase (302 aa).

Position 108–111 (S108–P111) interacts with (6S)-5,6,7,8-tetrahydrofolate.

Belongs to the Fmt family.

The catalysed reaction is L-methionyl-tRNA(fMet) + (6R)-10-formyltetrahydrofolate = N-formyl-L-methionyl-tRNA(fMet) + (6S)-5,6,7,8-tetrahydrofolate + H(+). In terms of biological role, attaches a formyl group to the free amino group of methionyl-tRNA(fMet). The formyl group appears to play a dual role in the initiator identity of N-formylmethionyl-tRNA by promoting its recognition by IF2 and preventing the misappropriation of this tRNA by the elongation apparatus. The sequence is that of Methionyl-tRNA formyltransferase from Nitratiruptor sp. (strain SB155-2).